Consider the following 217-residue polypeptide: Claudin-9 (217 aa).

Topologically, residues 1 to 7 are cytoplasmic; that stretch reads MASTGLE. The chain crosses the membrane as a helical span at residues 8 to 28; sequence LLGMTLAVLGWLGTLVSCALP. At 29-81 the chain is on the extracellular side; the sequence is LWKVTAFIGNSIVVAQVVWEGLWMSCVVQSTGQMQCKVYDSLLALPQDLQAAR. The chain crosses the membrane as a helical span at residues 82–102; it reads ALCVIALLLALLGLLVAITGA. Topologically, residues 103-116 are cytoplasmic; that stretch reads QCTTCVEDEGAKAR. A helical transmembrane segment spans residues 117-137; it reads IVLTAGVILLLAGILVLIPVC. The Extracellular portion of the chain corresponds to 138–159; it reads WTAHAIIQDFYNPLVAEALKRE. A helical transmembrane segment spans residues 160 to 180; it reads LGASLYLGWAAAALLMLGGGL. Residues 181 to 217 lie on the Cytoplasmic side of the membrane; that stretch reads LCCTCPPPQVERPRGPRLGYSIPSRSGASGLDKRDYV. The interval 194-217 is disordered; the sequence is RGPRLGYSIPSRSGASGLDKRDYV.

The protein belongs to the claudin family. In terms of assembly, interacts with CLDN1, CD81 and OCLN. Expressed in the liver, in peripheral blood mononuclear cells and hepatocarcinoma cell lines.

It is found in the cell junction. The protein resides in the tight junction. It localises to the cell membrane. Plays a major role in tight junction-specific obliteration of the intercellular space, through calcium-independent cell-adhesion activity. Its function is as follows. (Microbial infection) Acts as a receptor for hepatitis C virus (HCV) entry into hepatic cells. This Homo sapiens (Human) protein is Claudin-9 (CLDN9).